The primary structure comprises 373 residues: WAT1-related protein At4g30420 (373 aa).

Helical transmembrane passes span 2–22, 29–49, 55–75, 94–114, 125–145, 173–193, 205–225, 244–264, 270–290, and 294–314; these read AMTM…ATLV, VFIL…LYLS, IAIS…SLIG, MGSA…FLAG, GLAK…MTLL, WLIG…WLIL, LSLS…VTFF, CLYA…WAIA, FSAL…ALFF, and IYTG…TVLW. 2 consecutive EamA domains span residues 9–135 and 186–313; these read CYAG…TILC and CWSF…YTVL.

It belongs to the drug/metabolite transporter (DMT) superfamily. Plant drug/metabolite exporter (P-DME) (TC 2.A.7.4) family.

Its subcellular location is the membrane. This chain is WAT1-related protein At4g30420, found in Arabidopsis thaliana (Mouse-ear cress).